The chain runs to 220 residues: Mediator of RNA polymerase II transcription subunit 7 (220 aa).

It belongs to the Mediator complex subunit 7 family. In terms of assembly, component of the Mediator complex. Interacts with MED21.

The protein resides in the nucleus. Its function is as follows. Component of the Mediator complex, a coactivator involved in the regulated transcription of nearly all RNA polymerase II-dependent genes. Mediator functions as a bridge to convey information from gene-specific regulatory proteins to the basal RNA polymerase II transcription machinery. Mediator is recruited to promoters by direct interactions with regulatory proteins and serves as a scaffold for the assembly of a functional preinitiation complex with RNA polymerase II and the general transcription factors. Required for activated transcription of the MtnA, MtnB and MtnD genes. The chain is Mediator of RNA polymerase II transcription subunit 7 (MED7) from Drosophila melanogaster (Fruit fly).